We begin with the raw amino-acid sequence, 552 residues long: MNRPCNIAARLPELARERPDQIAIRCPGRRGAGNGMAAYDVTLDYRQLDARSDAMAAGLAGYGIGRGVRTVVMVRPSPEFFLLMFALFKLGAVPVLVDPGIDRRALKQCLDEAQPEAFIGIPLAHVARLVLRWAPSAARLVTVGRRLGWGGTTLAALERAGAKGGPMLAATDGEDMAAILFTSGSTGVPKGVVYRHRHFVGQIQLLGSAFGMEAGGVDLPTFPPFALFDPALGLTSVIPDMDPTRPAQADPVRLHDAIQRFGVTQLFGSPALMRVLAKHGRPLPTVTRVTSAGAPVPPDVVATIRSLLPADAQFWTPYGATECLPVAVVEGRELERTRAATEAGAGTCVGSVVAPNEVRIIAIDDAPLADWSQARVLAVGEVGEITVAGPTATDSYFNRPQATAAAKIRETLADGSTRVVHRMGDVGYFDAQGRLWFCGRKTQRVETARGPLYTEQVEPVFNTVAGVARTALVGVGAAGAQVPVLCVELLRGQSDSPALQEALRAHAAARTPEAGLQHFLVHPAFPVDIRHNAKIGREKLAVWASAELEKRA.

ATP is bound by residues 182–190, 316–321, D425, and R440; these read TSGSTGVPK and TPYGAT.

The protein belongs to the ATP-dependent AMP-binding enzyme family. In terms of assembly, monomer.

The catalysed reaction is a (2R,3S)-2-alkyl-3-hydroxyalkanoate + ATP = a cis-3-alkyl-4-alkyloxetan-2-one + AMP + diphosphate. In terms of biological role, involved in olefin biosynthesis. Catalyzes the conversion of beta-hydroxy acid substrates to beta-lactones in the presence of ATP. Can use all four stereoisomers of 2-hexyl-3-hydroxydecanoic acid. The protein is Olefin beta-lactone synthetase of Stenotrophomonas maltophilia (strain K279a).